The primary structure comprises 206 residues: Large ribosomal subunit protein uL4 (206 aa).

Belongs to the universal ribosomal protein uL4 family. Part of the 50S ribosomal subunit.

One of the primary rRNA binding proteins, this protein initially binds near the 5'-end of the 23S rRNA. It is important during the early stages of 50S assembly. It makes multiple contacts with different domains of the 23S rRNA in the assembled 50S subunit and ribosome. In terms of biological role, forms part of the polypeptide exit tunnel. The protein is Large ribosomal subunit protein uL4 of Xanthobacter autotrophicus (strain ATCC BAA-1158 / Py2).